The following is a 502-amino-acid chain: GTPase Obg (502 aa).

In terms of domain architecture, Obg spans 2–159 (NRFIDRVVLH…HDLILELKSM (158 aa)). In terms of domain architecture, OBG-type G spans 160-341 (ADVGLVGFPS…LKYKLLEIVQ (182 aa)). Residues 166-173 (GFPSAGKS), 191-195 (FTTLQ), 212-215 (DVPG), 292-295 (NKAD), and 322-324 (SAV) contribute to the GTP site. The Mg(2+) site is built by Ser173 and Thr193. Positions 364–444 (DGRRRREEFE…IGGVTFEWEP (81 aa)) constitute an OCT domain.

Belongs to the TRAFAC class OBG-HflX-like GTPase superfamily. OBG GTPase family. As to quaternary structure, monomer. Mg(2+) is required as a cofactor.

Its subcellular location is the cytoplasm. Functionally, an essential GTPase which binds GTP, GDP and possibly (p)ppGpp with moderate affinity, with high nucleotide exchange rates and a fairly low GTP hydrolysis rate. Plays a role in control of the cell cycle, stress response, ribosome biogenesis and in those bacteria that undergo differentiation, in morphogenesis control. In Corynebacterium efficiens (strain DSM 44549 / YS-314 / AJ 12310 / JCM 11189 / NBRC 100395), this protein is GTPase Obg.